A 438-amino-acid chain; its full sequence is Dihydrolipoyllysine-residue acetyltransferase component of pyruvate dehydrogenase complex (438 aa).

Positions 1 to 76 (MFKVKFADIG…KVGDVVMEIE (76 aa)) constitute a Lipoyl-binding domain. K42 is modified (N6-lipoyllysine). In terms of domain architecture, Peripheral subunit-binding (PSBD) spans 132 to 169 (KATPLARKVAADLNIDLSLVTPTGPNQRILVADIKNHQ). Residues 172-181 (STQLASQPIS) are compositionally biased toward polar residues. A disordered region spans residues 172–192 (STQLASQPISQPAPTPSPSAH). Residue H411 is part of the active site.

This sequence belongs to the 2-oxoacid dehydrogenase family. In terms of assembly, forms a 24-polypeptide structural core with octahedral symmetry. (R)-lipoate serves as cofactor.

The catalysed reaction is N(6)-[(R)-dihydrolipoyl]-L-lysyl-[protein] + acetyl-CoA = N(6)-[(R)-S(8)-acetyldihydrolipoyl]-L-lysyl-[protein] + CoA. In terms of biological role, the pyruvate dehydrogenase complex catalyzes the overall conversion of pyruvate to acetyl-CoA and CO(2). It contains multiple copies of three enzymatic components: pyruvate dehydrogenase (E1), dihydrolipoamide acetyltransferase (E2) and lipoamide dehydrogenase (E3). The chain is Dihydrolipoyllysine-residue acetyltransferase component of pyruvate dehydrogenase complex (pdhC) from Mycoplasma capricolum subsp. capricolum (strain California kid / ATCC 27343 / NCTC 10154).